The chain runs to 600 residues: Proline--tRNA ligase (600 aa).

It belongs to the class-II aminoacyl-tRNA synthetase family. ProS type 1 subfamily. As to quaternary structure, homodimer.

Its subcellular location is the cytoplasm. The enzyme catalyses tRNA(Pro) + L-proline + ATP = L-prolyl-tRNA(Pro) + AMP + diphosphate. Its function is as follows. Catalyzes the attachment of proline to tRNA(Pro) in a two-step reaction: proline is first activated by ATP to form Pro-AMP and then transferred to the acceptor end of tRNA(Pro). As ProRS can inadvertently accommodate and process non-cognate amino acids such as alanine and cysteine, to avoid such errors it has two additional distinct editing activities against alanine. One activity is designated as 'pretransfer' editing and involves the tRNA(Pro)-independent hydrolysis of activated Ala-AMP. The other activity is designated 'posttransfer' editing and involves deacylation of mischarged Ala-tRNA(Pro). The misacylated Cys-tRNA(Pro) is not edited by ProRS. The sequence is that of Proline--tRNA ligase from Prochlorococcus marinus subsp. pastoris (strain CCMP1986 / NIES-2087 / MED4).